Consider the following 295-residue polypeptide: MRNTSKELQGATHRYAPCDWYYHVPVKRSEKAVDAPPASQIPGLSNLGDSHSENLPGTRRYWIKETDSEYVKLAKQGGRPDLLKHFAPGTRKGSPVAYSLPDWYIHHSKPPTASQQEVRAVSMPDYMVHEEFNPDQANGSYASRRGPFDFDMKTVWQREAEELEKEKKKLRLPAIDSKYLSKAGTPLGPKNPAGSRLSFPPVPGQKNSSPTNFSKLISNGYKDEWLQQQQRADSDKRTPKTSRASVLSQSPRDLEGPQDAARLQDAEASEGPEDTPESSQSPEESVSASTPAELK.

Disordered stretches follow at residues 33–52 (VDAP…DSHS) and 180–295 (LSKA…AELK). Ser-50 carries the post-translational modification Phosphoserine. Polar residues-rich tracts occupy residues 205 to 217 (QKNS…SKLI) and 241 to 251 (TSRASVLSQSP). Positions 267 to 276 (EASEGPEDTP) are enriched in acidic residues. The span at 277 to 289 (ESSQSPEESVSAS) shows a compositional bias: low complexity.

This is an uncharacterized protein from Homo sapiens (Human).